The primary structure comprises 670 residues: MAIFKDCEVEIFSEEDGFRNAWYRAILEETPTNPTSESKKLRFSYMTKSLNKEGSSSPPTVEQRFIRPVPPENLYNGVVFEEGTMVDADYKHRWRTGVVINKMENDSYLVLFDCPPDIIQFETKHLRAHLDWTGSEWVQPEVRELSKSMFSPGTLVEVSCVIDKVEVSWVTAMIVKEIEESGEKKFIVKVCNKHLSCRVDEAKPNMTVDSCCVRPRPPLFFVEEYDLRDCVEVFHGSSWRQGVVKGVHIEKQYTVTLEATKDKLVVKHSDLRPFKVWEDGVWHNGPQQKPVKESPSNAIKQKPMCSSSGARPMTPKMATKHARISFNPEENVEELSVAETVAATGKLEKMGIAEESVSCVTPLKQTEANAEGNKLEPMRNQNCLRNDSTQQMLPEEENSKDGSTKRKREEKHNSASSVMDEIDGTCNGSESEISNTGKSICNNDDVDDQPLSTELPYYQSLSVVNSFAADAEETPAKSARTISPFAKKLPFWKSYETDELYKSLPQSPHFSPLFKAKEDIREWSAVGMMVTFYCLLKEVKDLQLDDSSSKLSSLSSSLAELEKHGFNVTDPLSRISKVLPLQDKRAKKAEERKCLEKKIECEEIERKRFEEEFADFERIIIEKKRQALVAKEKKEAADKRIGEMKTCAETIDQEIKDEELEFQTTVSTPW.

2 disordered regions span residues 283 to 315 (HNGPQQKPVKESPSNAIKQKPMCSSSGARPMTP) and 368 to 445 (ANAE…NNDD). 3 stretches are compositionally biased toward polar residues: residues 294–309 (SPSNAIKQKPMCSSSG), 379–392 (RNQNCLRNDSTQQM), and 426–442 (CNGSESEISNTGKSICN). The DUF724 domain occupies 484–669 (PFAKKLPFWK…LEFQTTVSTP (186 aa)).

Expressed in stems and flowers.

The protein localises to the nucleus. In terms of biological role, may be involved in the polar growth of plant cells via transportation of RNAs. This chain is DUF724 domain-containing protein 1, found in Arabidopsis thaliana (Mouse-ear cress).